Consider the following 124-residue polypeptide: Small ribosomal subunit protein uS12 (124 aa).

Asp89 is subject to 3-methylthioaspartic acid.

The protein belongs to the universal ribosomal protein uS12 family. In terms of assembly, part of the 30S ribosomal subunit. Contacts proteins S8 and S17. May interact with IF1 in the 30S initiation complex.

In terms of biological role, with S4 and S5 plays an important role in translational accuracy. Interacts with and stabilizes bases of the 16S rRNA that are involved in tRNA selection in the A site and with the mRNA backbone. Located at the interface of the 30S and 50S subunits, it traverses the body of the 30S subunit contacting proteins on the other side and probably holding the rRNA structure together. The combined cluster of proteins S8, S12 and S17 appears to hold together the shoulder and platform of the 30S subunit. The sequence is that of Small ribosomal subunit protein uS12 from Psychrobacter arcticus (strain DSM 17307 / VKM B-2377 / 273-4).